Reading from the N-terminus, the 320-residue chain is Reticulocalbin-2 (320 aa).

Positions M1–A25 are cleaved as a signal peptide. 2 EF-hand domains span residues E64–H99 and Y100–D135. Ca(2+) contacts are provided by D77, D79, D81, E88, D113, N115, D117, T119, and E124. T140 carries the post-translational modification Phosphothreonine. 4 EF-hand domains span residues F150–E185, M189–A224, W230–G265, and I266–S301. Ca(2+)-binding residues include D167, E176, D202, N204, D206, E213, D243, D245, D247, R249, E254, D279, N281, D283, K285, and E290. The Prevents secretion from ER motif lies at H317–L320.

Belongs to the CREC family. Binds the snake venom phospholipase complex taipoxin. In terms of tissue distribution, ubiquitous.

It is found in the endoplasmic reticulum lumen. Not known. Binds calcium. The polypeptide is Reticulocalbin-2 (Rcn2) (Rattus norvegicus (Rat)).